A 256-amino-acid chain; its full sequence is CD209 antigen-like protein 2 (256 aa).

The Cytoplasmic segment spans residues 1–50; the sequence is MSDSKEPRAQPLGLLEEEELITSSMNFFPRDFGFRQTRGYKSLAGCLGHA. The short motif at 14–15 is the Endocytosis signal element; that stretch reads LL. Residues 51–71 form a helical; Signal-anchor for type II membrane protein membrane-spanning segment; that stretch reads PLVLPLLFFTLFTGLLVAILV. Topologically, residues 72 to 240 are extracellular; that stretch reads QVSKNPSSQR…KSAASCSRDE (169 aa). Disulfide bonds link C108–C119, C136–C229, and C208–C221. Residues 114–230 form the C-type lectin domain; that stretch reads FFQGNCYFIS…CSAAKFWICK (117 aa). The Ca(2+) site is built by E199, N201, I203, E206, N217, and D218.

Predominantly expressed in liver and axillary lymph nodes. At very low levels also found in other tissues.

The protein resides in the membrane. Its function is as follows. Probable pathogen-recognition receptor involved in peripheral immune surveillance in liver. May mediate the endocytosis of pathogens which are subsequently degraded in lysosomal compartments. Probably recognizes in a calcium-dependent manner high mannose N-linked oligosaccharides in a variety of pathogen antigens. Is a receptor for ICAM3, probably by binding to mannose-like carbohydrates. This chain is CD209 antigen-like protein 2 (CD209L2), found in Macaca mulatta (Rhesus macaque).